The chain runs to 396 residues: L-lactate dehydrogenase (396 aa).

The region spanning 1 to 380 (MIISAASDYR…SGDSLVQELG (380 aa)) is the FMN hydroxy acid dehydrogenase domain. Tyrosine 24 lines the substrate pocket. Residues serine 106 and glutamine 127 each coordinate FMN. Tyrosine 129 serves as a coordination point for substrate. Threonine 155 lines the FMN pocket. Arginine 164 is a binding site for substrate. Lysine 251 contacts FMN. Residue histidine 275 is the Proton acceptor of the active site. Arginine 278 contributes to the substrate binding site. An FMN-binding site is contributed by 306–330 (DSGIRNGLDVVRMIALGADTVLLGR).

The protein belongs to the FMN-dependent alpha-hydroxy acid dehydrogenase family. Requires FMN as cofactor.

Its subcellular location is the cell inner membrane. The enzyme catalyses (S)-lactate + A = pyruvate + AH2. Catalyzes the conversion of L-lactate to pyruvate. Is coupled to the respiratory chain. This Salmonella enteritidis PT4 (strain P125109) protein is L-lactate dehydrogenase.